Consider the following 80-residue polypeptide: Calmodulin (80 aa).

EF-hand domains lie at D12–K47 and L48–K80. D25, D27, N29, E36, D61, D63, D65, Q67, and E72 together coordinate Ca(2+).

The protein belongs to the calmodulin family.

In terms of biological role, calmodulin mediates the control of a large number of enzymes, ion channels and other proteins by Ca(2+). Among the enzymes to be stimulated by the calmodulin-Ca(2+) complex are a number of protein kinases and phosphatases. This Strongylocentrotus purpuratus (Purple sea urchin) protein is Calmodulin.